A 308-amino-acid chain; its full sequence is MTSTSTTTNGDSFTVKAGLAQMLKGGVIMDVTTPAEARIAEEAGACAVMALERIPSDIRAAGGVARMSNPSMIKEIQAAVTIPVMAKARIGHVTECRILEQLGVDYIDESEVLTPADDTYHVQKDQFKAPFVCGCRNLGEALRRIKEGAAMIRTKGEAGTGDVVEAVKHIRTVNAEIAQAKAALASGGELAVAKMAREIGADVELLKKTAELGRLPVVNFAAGGVATPADAALMMEFGCDGVFVGSGIFKDAKTPEHALQRARAVVKAVANWNDYGALVEACIEHGEAMKGISNAGMKPEERMAGRGW.

D-ribose 5-phosphate is bound at residue aspartate 30. The Schiff-base intermediate with D-ribose 5-phosphate role is filled by lysine 87. Glycine 159 is a binding site for D-ribose 5-phosphate. Arginine 171 is a D-glyceraldehyde 3-phosphate binding site. Residues glycine 224 and 245–246 (GS) contribute to the D-ribose 5-phosphate site.

The protein belongs to the PdxS/SNZ family.

It catalyses the reaction aldehydo-D-ribose 5-phosphate + D-glyceraldehyde 3-phosphate + L-glutamine = pyridoxal 5'-phosphate + L-glutamate + phosphate + 3 H2O + H(+). It participates in cofactor biosynthesis; pyridoxal 5'-phosphate biosynthesis. Catalyzes the formation of pyridoxal 5'-phosphate from ribose 5-phosphate (RBP), glyceraldehyde 3-phosphate (G3P) and ammonia. The ammonia is provided by pdx-2. Can also use ribulose 5-phosphate and dihydroxyacetone phosphate as substrates, resulting from enzyme-catalyzed isomerization of RBP and G3P, respectively. Also plays an indirect role in resistance to singlet oxygen-generating photosensitizers. The polypeptide is Probable pyridoxal 5'-phosphate synthase subunit pdx-1 (pdx-1) (Neurospora crassa (strain ATCC 24698 / 74-OR23-1A / CBS 708.71 / DSM 1257 / FGSC 987)).